We begin with the raw amino-acid sequence, 478 residues long: ATP synthase subunit beta (478 aa).

Position 164-171 (164-171 (GGAGVGKT)) interacts with ATP.

This sequence belongs to the ATPase alpha/beta chains family. F-type ATPases have 2 components, CF(1) - the catalytic core - and CF(0) - the membrane proton channel. CF(1) has five subunits: alpha(3), beta(3), gamma(1), delta(1), epsilon(1). CF(0) has three main subunits: a(1), b(2) and c(9-12). The alpha and beta chains form an alternating ring which encloses part of the gamma chain. CF(1) is attached to CF(0) by a central stalk formed by the gamma and epsilon chains, while a peripheral stalk is formed by the delta and b chains.

Its subcellular location is the cell membrane. It carries out the reaction ATP + H2O + 4 H(+)(in) = ADP + phosphate + 5 H(+)(out). Its function is as follows. Produces ATP from ADP in the presence of a proton gradient across the membrane. The catalytic sites are hosted primarily by the beta subunits. The chain is ATP synthase subunit beta from Streptomyces avermitilis (strain ATCC 31267 / DSM 46492 / JCM 5070 / NBRC 14893 / NCIMB 12804 / NRRL 8165 / MA-4680).